A 227-amino-acid chain; its full sequence is Phosphoribosylformylglycinamidine synthase subunit PurQ (227 aa).

Residues arginine 2–arginine 227 enclose the Glutamine amidotransferase type-1 domain. Cysteine 85 serves as the catalytic Nucleophile. Residues histidine 200 and glutamate 202 contribute to the active site.

Part of the FGAM synthase complex composed of 1 PurL, 1 PurQ and 2 PurS subunits.

Its subcellular location is the cytoplasm. The catalysed reaction is N(2)-formyl-N(1)-(5-phospho-beta-D-ribosyl)glycinamide + L-glutamine + ATP + H2O = 2-formamido-N(1)-(5-O-phospho-beta-D-ribosyl)acetamidine + L-glutamate + ADP + phosphate + H(+). The enzyme catalyses L-glutamine + H2O = L-glutamate + NH4(+). It participates in purine metabolism; IMP biosynthesis via de novo pathway; 5-amino-1-(5-phospho-D-ribosyl)imidazole from N(2)-formyl-N(1)-(5-phospho-D-ribosyl)glycinamide: step 1/2. Its function is as follows. Part of the phosphoribosylformylglycinamidine synthase complex involved in the purines biosynthetic pathway. Catalyzes the ATP-dependent conversion of formylglycinamide ribonucleotide (FGAR) and glutamine to yield formylglycinamidine ribonucleotide (FGAM) and glutamate. The FGAM synthase complex is composed of three subunits. PurQ produces an ammonia molecule by converting glutamine to glutamate. PurL transfers the ammonia molecule to FGAR to form FGAM in an ATP-dependent manner. PurS interacts with PurQ and PurL and is thought to assist in the transfer of the ammonia molecule from PurQ to PurL. The sequence is that of Phosphoribosylformylglycinamidine synthase subunit PurQ from Thermus thermophilus (strain ATCC 27634 / DSM 579 / HB8).